Consider the following 384-residue polypeptide: 2-isopropylmalate synthase 2 (384 aa).

In terms of domain architecture, Pyruvate carboxyltransferase spans valine 9–arginine 260. Residues aspartate 18, histidine 198, histidine 200, and asparagine 234 each coordinate Mn(2+).

Belongs to the alpha-IPM synthase/homocitrate synthase family. LeuA type 1 subfamily. As to quaternary structure, homodimer. It depends on Mn(2+) as a cofactor.

It is found in the cytoplasm. It catalyses the reaction 3-methyl-2-oxobutanoate + acetyl-CoA + H2O = (2S)-2-isopropylmalate + CoA + H(+). It participates in amino-acid biosynthesis; L-leucine biosynthesis; L-leucine from 3-methyl-2-oxobutanoate: step 1/4. Functionally, catalyzes the condensation of the acetyl group of acetyl-CoA with 3-methyl-2-oxobutanoate (2-ketoisovalerate) to form 3-carboxy-3-hydroxy-4-methylpentanoate (2-isopropylmalate). In Caldanaerobacter subterraneus subsp. tengcongensis (strain DSM 15242 / JCM 11007 / NBRC 100824 / MB4) (Thermoanaerobacter tengcongensis), this protein is 2-isopropylmalate synthase 2.